The primary structure comprises 192 residues: MDVILLERISKLGQMGETVKVRDGFARNYLLPLGKALRANAANKTRFEAERATLEARNLERKSEAQKVADVLDGKSFIVVRSAGETGQLYGSVAARDVVEILAAEGFNIGRNQVHLNTPIKAIGLHKVELQLHAEVEIHVELNVARSAEEAERQSKGEELTSVDAIYGVDEDALRPEDFFDPEADGVDEDEA.

Residues D172–A192 are disordered. The segment covering F179–A192 has biased composition (acidic residues).

This sequence belongs to the bacterial ribosomal protein bL9 family.

Binds to the 23S rRNA. This Rhizobium leguminosarum bv. trifolii (strain WSM2304) protein is Large ribosomal subunit protein bL9.